Consider the following 316-residue polypeptide: Endochitinase 2 (316 aa).

The N-terminal stretch at 1–18 (EFTTLFLLFSVLLLSASA) is a signal peptide. The 42-residue stretch at 19–60 (EQCGSQAGGALCASGLCCSKFGWCGNTNDYCGPGNCQSQCPG) folds into the Chitin-binding type-1 domain. Disulfide bonds link Cys-21–Cys-36, Cys-30–Cys-42, Cys-35–Cys-49, Cys-54–Cys-58, Cys-87–Cys-150, Cys-162–Cys-170, and Cys-269–Cys-301. The active-site Proton donor is the Glu-132. Residues 310–316 (GLLVDTV) constitute a propeptide, removed in mature form, vacuolar targeting.

This sequence belongs to the glycosyl hydrolase 19 family. Chitinase class I subfamily.

The protein resides in the vacuole. The catalysed reaction is Random endo-hydrolysis of N-acetyl-beta-D-glucosaminide (1-&gt;4)-beta-linkages in chitin and chitodextrins.. In terms of biological role, defense against chitin-containing fungal pathogens. In Solanum tuberosum (Potato), this protein is Endochitinase 2 (CHTB2).